The following is a 270-amino-acid chain: Ribosomal RNA small subunit methyltransferase A (270 aa).

Residues Asn18, Leu20, Gly45, Glu66, Asp91, and Asn112 each contribute to the S-adenosyl-L-methionine site.

Belongs to the class I-like SAM-binding methyltransferase superfamily. rRNA adenine N(6)-methyltransferase family. RsmA subfamily.

It localises to the cytoplasm. The enzyme catalyses adenosine(1518)/adenosine(1519) in 16S rRNA + 4 S-adenosyl-L-methionine = N(6)-dimethyladenosine(1518)/N(6)-dimethyladenosine(1519) in 16S rRNA + 4 S-adenosyl-L-homocysteine + 4 H(+). Functionally, specifically dimethylates two adjacent adenosines (A1518 and A1519) in the loop of a conserved hairpin near the 3'-end of 16S rRNA in the 30S particle. May play a critical role in biogenesis of 30S subunits. The polypeptide is Ribosomal RNA small subunit methyltransferase A (Psychromonas ingrahamii (strain DSM 17664 / CCUG 51855 / 37)).